The sequence spans 272 residues: Ribosomal RNA small subunit methyltransferase A (272 aa).

6 residues coordinate S-adenosyl-L-methionine: Asn-18, Leu-20, Gly-45, Glu-66, Asp-91, and Asn-113.

This sequence belongs to the class I-like SAM-binding methyltransferase superfamily. rRNA adenine N(6)-methyltransferase family. RsmA subfamily.

It is found in the cytoplasm. It carries out the reaction adenosine(1518)/adenosine(1519) in 16S rRNA + 4 S-adenosyl-L-methionine = N(6)-dimethyladenosine(1518)/N(6)-dimethyladenosine(1519) in 16S rRNA + 4 S-adenosyl-L-homocysteine + 4 H(+). Specifically dimethylates two adjacent adenosines (A1518 and A1519) in the loop of a conserved hairpin near the 3'-end of 16S rRNA in the 30S particle. May play a critical role in biogenesis of 30S subunits. The chain is Ribosomal RNA small subunit methyltransferase A from Serratia proteamaculans (strain 568).